Reading from the N-terminus, the 163-residue chain is Nucleotide-binding protein Mflv_5248 (163 aa).

This sequence belongs to the YajQ family.

Nucleotide-binding protein. This is Nucleotide-binding protein Mflv_5248 from Mycolicibacterium gilvum (strain PYR-GCK) (Mycobacterium gilvum (strain PYR-GCK)).